We begin with the raw amino-acid sequence, 412 residues long: Class E basic helix-loop-helix protein 40 (412 aa).

The tract at residues 1-139 (MERIPSAQPP…LSGRNVETGQ (139 aa)) is essential for interaction with BMAL1, E-box binding and repressor activity against the CLOCK-BMAL1 heterodimer. A bHLH domain is found at 52-107 (TYKLPHRLIEKKRRDRINECIAQLKDLLPEHLKLTTLGHLEKAVVLELTLKHVKAL). The necessary for interaction with RXRA and repressor activity against RXRA stretch occupies residues 75–79 (LKDLL). One can recognise an Orange domain in the interval 142 to 175 (FCSGFQTCAREVLQYLAKHENTRDLKSSQLVTHL). A Glycyl lysine isopeptide (Lys-Gly) (interchain with G-Cter in SUMO1, SUMO2 and SUMO3) cross-link involves residue K159. A Glycyl lysine isopeptide (Lys-Gly) (interchain with G-Cter in SUMO2) cross-link involves residue K167. Disordered regions lie at residues 183 to 259 (LQGG…SEQL) and 275 to 309 (IGAI…LISS). Phosphoserine is present on S235. A compositionally biased stretch (basic and acidic residues) spans 248 to 259 (ESEKGDLRSEQL). K279 is covalently cross-linked (Glycyl lysine isopeptide (Lys-Gly) (interchain with G-Cter in SUMO1); alternate). K279 is covalently cross-linked (Glycyl lysine isopeptide (Lys-Gly) (interchain with G-Cter in SUMO1, SUMO2 and SUMO3); alternate). K279 participates in a covalent cross-link: Glycyl lysine isopeptide (Lys-Gly) (interchain with G-Cter in SUMO2); alternate. Residue K288 forms a Glycyl lysine isopeptide (Lys-Gly) (interchain with G-Cter in SUMO2) linkage. The residue at position 383 (S383) is a Phosphoserine.

As to quaternary structure, homodimer. Heterodimer with BHLHE41/DEC2. Interacts with TCF3/E47. Interacts with ubiquitin-conjugating enzyme UBE2I/UBC9. Interacts with HDAC1, SUMO1, RXRA and BMAL1. In terms of processing, ubiquitinated; which may lead to proteasomal degradation. Sumoylation inhibits its ubiquitination and promotes its negative regulation of the CLOCK-BMAL1 heterodimer transcriptional activator activity.

It localises to the cytoplasm. The protein resides in the nucleus. In terms of biological role, transcriptional repressor involved in the regulation of the circadian rhythm by negatively regulating the activity of the clock genes and clock-controlled genes. Acts as the negative limb of a novel autoregulatory feedback loop (DEC loop) which differs from the one formed by the PER and CRY transcriptional repressors (PER/CRY loop). Both these loops are interlocked as it represses the expression of PER1/2 and in turn is repressed by PER1/2 and CRY1/2. Represses the activity of the circadian transcriptional activator: CLOCK-BMAL1|BMAL2 heterodimer by competing for the binding to E-box elements (5'-CACGTG-3') found within the promoters of its target genes. Negatively regulates its own expression and the expression of DBP and BHLHE41/DEC2. Acts as a corepressor of RXR and the RXR-LXR heterodimers and represses the ligand-induced RXRA and NR1H3/LXRA transactivation activity. May be involved in the regulation of chondrocyte differentiation via the cAMP pathway. Represses the transcription of NR0B2 and attentuates the transactivation of NR0B2 by the CLOCK-BMAL1 complex. Drives the circadian rhythm of blood pressure through transcriptional repression of ATP1B1 in the cardiovascular system. The protein is Class E basic helix-loop-helix protein 40 (BHLHE40) of Pongo abelii (Sumatran orangutan).